We begin with the raw amino-acid sequence, 101 residues long: Protein mes1 (101 aa).

The segment covering 1–19 has biased composition (basic and acidic residues); the sequence is MVNTDNKENEPPNMEKAHM. A disordered region spans residues 1–101; that stretch reads MVNTDNKENE…RSPNPLLSMR (101 aa).

In terms of assembly, interacts with slp1.

Its subcellular location is the cytoplasm. It localises to the nucleus. In terms of biological role, specifically required for meiosis II (MII). Binds to slp1, an activator of the anapahase promoting complex/cyclcosome (APC/C), and counteracts its function in promoting proteolysis of cdc13. By suppressing the degradation of cdc13 at anaphase I this protein may help maintain a sufficient level of cdc2 kinase activity to complete MII. The sequence is that of Protein mes1 (mes1) from Schizosaccharomyces pombe (strain 972 / ATCC 24843) (Fission yeast).